The chain runs to 265 residues: Isoprenyl transferase (265 aa).

Residue D35 is part of the active site. D35 contributes to the Mg(2+) binding site. Substrate contacts are provided by residues 36-39 (GNGR), W40, R48, H52, and 80-82 (STE). Catalysis depends on N83, which acts as the Proton acceptor. Substrate contacts are provided by residues W84, R86, R203, and 209–211 (RIS). Mg(2+) is bound at residue E222.

Belongs to the UPP synthase family. As to quaternary structure, homodimer. Mg(2+) is required as a cofactor.

In terms of biological role, catalyzes the condensation of isopentenyl diphosphate (IPP) with allylic pyrophosphates generating different type of terpenoids. In Prochlorococcus marinus (strain MIT 9313), this protein is Isoprenyl transferase.